A 400-amino-acid polypeptide reads, in one-letter code: Large envelope protein (400 aa).

An N-acetylmethionine modification is found at M1. G2 carries N-myristoyl glycine; by host lipidation. The interval 2 to 119 is pre-S1; the sequence is GGWSSKPRQG…PPLRDSHPQA (118 aa). The interval 2-174 is pre-S; that stretch reads GGWSSKPRQG…FSRIGDPALN (173 aa). The Virion surface; in external conformation segment spans residues 2 to 181; sequence GGWSSKPRQG…ALNMENITSG (180 aa). Topologically, residues 2–253 are intravirion; in internal conformation; the sequence is GGWSSKPRQG…PGYRWMCLRR (252 aa). An N-linked (GlcNAc...) asparagine glycan is attached at W4. A disordered region spans residues 85 to 118; sequence LTTVPAAPPPASSNRQSGKQPTPISPPLRDSHPQ. The span at 96-106 shows a compositional bias: polar residues; sequence SSNRQSGKQPT. A pre-S2 region spans residues 120 to 174; that stretch reads MQWNSTTFHQTLQDPRVRGLYFPAGGSSSGTVNPVPTTASPISSIFSRIGDPALN. A helical membrane pass occupies residues 182–202; that stretch reads FLGPLLVLQAGFFLLTRILTI. Topologically, residues 203-253 are intravirion; in external conformation; sequence PQSLDSWWTSLNFLGGTTVCLGQNSQSPISNHSPTSCPPTCPGYRWMCLRR. A helical transmembrane segment spans residues 254–274; it reads FIIFLFILLLCLIFLLVLLDY. The Virion surface segment spans residues 275–348; it reads QGMLPVCPLI…WASARFSWLS (74 aa). N320 is a glycosylation site (N-linked (GlcNAc...) asparagine; by host). Residues 349–369 form a helical membrane-spanning segment; it reads LLVPFVQWFVGLSPTVWLSVI. Residues 370 to 375 lie on the Intravirion side of the membrane; the sequence is WMMWYW. Residues 376–398 traverse the membrane as a helical segment; the sequence is GPSLYSILSPFLPLLPIFFCLWV. The Virion surface segment spans residues 399-400; that stretch reads YI.

It belongs to the orthohepadnavirus major surface antigen family. In terms of assembly, in its internal form (Li-HBsAg), interacts with the capsid protein and with the isoform S. Interacts with host chaperone CANX. As to quaternary structure, associates with host chaperone CANX through its pre-S2 N glycan; this association may be essential for isoform M proper secretion. Interacts with isoform L. Interacts with the antigens of satellite virus HDV (HDVAgs); this interaction is required for encapsidation of HDV genomic RNA. In terms of processing, isoform M is N-terminally acetylated by host at a ratio of 90%, and N-glycosylated by host at the pre-S2 region. Post-translationally, myristoylated.

It localises to the virion membrane. In terms of biological role, the large envelope protein exists in two topological conformations, one which is termed 'external' or Le-HBsAg and the other 'internal' or Li-HBsAg. In its external conformation the protein attaches the virus to cell receptors and thereby initiating infection. This interaction determines the species specificity and liver tropism. This attachment induces virion internalization predominantly through caveolin-mediated endocytosis. The large envelope protein also assures fusion between virion membrane and endosomal membrane. In its internal conformation the protein plays a role in virion morphogenesis and mediates the contact with the nucleocapsid like a matrix protein. The middle envelope protein plays an important role in the budding of the virion. It is involved in the induction of budding in a nucleocapsid independent way. In this process the majority of envelope proteins bud to form subviral lipoprotein particles of 22 nm of diameter that do not contain a nucleocapsid. This chain is Large envelope protein, found in Homo sapiens (Human).